Reading from the N-terminus, the 495-residue chain is Ribose import ATP-binding protein RbsA (495 aa).

ABC transporter domains follow at residues 7 to 242 (LEMR…VGRP) and 250 to 491 (ERDI…TGVN). 39–46 (GENGAGKS) provides a ligand contact to ATP.

It belongs to the ABC transporter superfamily. Ribose importer (TC 3.A.1.2.1) family. As to quaternary structure, the complex is composed of an ATP-binding protein (RbsA), two transmembrane proteins (RbsC) and a solute-binding protein (RbsB).

Its subcellular location is the cell inner membrane. The enzyme catalyses D-ribose(out) + ATP + H2O = D-ribose(in) + ADP + phosphate + H(+). In terms of biological role, part of the ABC transporter complex RbsABC involved in ribose import. Responsible for energy coupling to the transport system. This Shigella dysenteriae serotype 1 (strain Sd197) protein is Ribose import ATP-binding protein RbsA.